We begin with the raw amino-acid sequence, 222 residues long: Probable GTP-binding protein EngB (222 aa).

One can recognise an EngB-type G domain in the interval 22–197 (TSAEIAFVGR…ETVVAGWFAG (176 aa)). Positions 37 and 59 each coordinate Mg(2+). A disordered region spans residues 201-222 (RQADELTDGEPDDRTPDPDSAS). Over residues 212–222 (DDRTPDPDSAS) the composition is skewed to basic and acidic residues.

The protein belongs to the TRAFAC class TrmE-Era-EngA-EngB-Septin-like GTPase superfamily. EngB GTPase family. Mg(2+) is required as a cofactor.

Functionally, necessary for normal cell division and for the maintenance of normal septation. In Laribacter hongkongensis (strain HLHK9), this protein is Probable GTP-binding protein EngB.